The primary structure comprises 276 residues: NAD kinase (276 aa).

Catalysis depends on aspartate 68, which acts as the Proton acceptor. NAD(+) is bound by residues 68 to 69 (DG), arginine 73, 138 to 139 (NE), lysine 149, aspartate 168, 179 to 184 (TAYSLS), and glutamine 237.

This sequence belongs to the NAD kinase family. A divalent metal cation is required as a cofactor.

Its subcellular location is the cytoplasm. It carries out the reaction NAD(+) + ATP = ADP + NADP(+) + H(+). In terms of biological role, involved in the regulation of the intracellular balance of NAD and NADP, and is a key enzyme in the biosynthesis of NADP. Catalyzes specifically the phosphorylation on 2'-hydroxyl of the adenosine moiety of NAD to yield NADP. In Methanopyrus kandleri (strain AV19 / DSM 6324 / JCM 9639 / NBRC 100938), this protein is NAD kinase.